Here is a 663-residue protein sequence, read N- to C-terminus: 72 kDa type IV collagenase (663 aa).

The first 26 residues, 1–26 (MKTHSVFGFFFKVLLIQVYLFNKTLA), serve as a signal peptide directing secretion. The propeptide at 27–106 (APSPIIKFPG…PRCGNPDVAN (80 aa)) is activation peptide. A Cysteine switch motif is present at residues 97–104 (PRCGNPDV). Cys-99 provides a ligand contact to Zn(2+). The interval 107–218 (YNFFPRKPKW…LWTLGEGQVV (112 aa)) is collagenase-like 1. Positions 131 and 165 each coordinate Ca(2+). The Zn(2+) site is built by His-175 and Asp-177. Residues Asp-182 and Gly-183 each contribute to the Ca(2+) site. His-190 is a binding site for Zn(2+). Ca(2+) contacts are provided by Gly-197, Gly-199, and Asp-201. His-203 is a Zn(2+) binding site. Positions 205, 206, and 208 each coordinate Ca(2+). The collagen-binding stretch occupies residues 219–393 (RVKYGNADGE…WGFCPDQGYS (175 aa)). Fibronectin type-II domains are found at residues 225 to 273 (ADGE…FCPH), 283 to 331 (GDGQ…FCPE), and 341 to 389 (SEGA…FCPD). Disulfide bonds link Cys-230–Cys-256, Cys-244–Cys-271, Cys-288–Cys-314, Cys-302–Cys-329, Cys-346–Cys-372, and Cys-360–Cys-387. A collagenase-like 2 region spans residues 394–468 (LFLVAAHEFG…GPRPTLGPVT (75 aa)). His-400 is a binding site for Zn(2+). Residue Glu-401 is part of the active site. 2 residues coordinate Zn(2+): His-404 and His-410. The interval 445–464 (SPDVEPGPGPGPGPGPRPTL) is disordered. Residues 449-463 (EPGPGPGPGPGPRPT) are compositionally biased toward pro residues. Residues Cys-472 and Cys-663 are joined by a disulfide bond. Hemopexin repeat units lie at residues 475 to 519 (DIVF…WPDL), 520 to 566 (PEKI…GLPP), 568 to 616 (VQRI…WNGV), and 617 to 663 (PDNL…WLGC). Residues Asp-479, Asp-524, Asp-572, and Asp-621 each coordinate Ca(2+).

The protein belongs to the peptidase M10A family. Ligand for integrin alpha-V/beta-3. It depends on Ca(2+) as a cofactor. Zn(2+) serves as cofactor. Post-translationally, the propeptide is processed by MMP14 (MT-MMP1) and MMP16 (MT-MMP3). As to expression, produced by normal skin fibroblasts.

It is found in the secreted. It localises to the extracellular space. The protein resides in the extracellular matrix. It catalyses the reaction Cleavage of gelatin type I and collagen types IV, V, VII, X. Cleaves the collagen-like sequence Pro-Gln-Gly-|-Ile-Ala-Gly-Gln.. This chain is 72 kDa type IV collagenase (MMP2), found in Gallus gallus (Chicken).